Consider the following 698-residue polypeptide: Effector protein AvrPphDPgy (698 aa).

Residues 1 to 15 (MNPLRSIQHNITTPP) show a composition bias toward polar residues. 2 disordered regions span residues 1 to 36 (MNPL…HPKR) and 171 to 200 (VDSS…DSDS). Residues 172-181 (DSSSPLLSSP) are compositionally biased toward low complexity.

The protein resides in the secreted. Effector protein involved in non-host recognition. In Pseudomonas savastanoi pv. glycinea (Pseudomonas syringae pv. glycinea), this protein is Effector protein AvrPphDPgy (avrPphDPgy).